Consider the following 397-residue polypeptide: Metal tolerance protein 4 (397 aa).

Residues 1–19 (MEAKGENDARAPLLAERRR) are compositionally biased toward basic and acidic residues. The disordered stretch occupies residues 1 to 27 (MEAKGENDARAPLLAERRRNSVGSMRG). Residues 1 to 104 (MEAKGENDAR…EQKQSEFAMK (104 aa)) lie on the Cytoplasmic side of the membrane. The chain crosses the membrane as a helical span at residues 105-122 (ISNYANMILLALKIYATI). The Vacuolar portion of the chain corresponds to 123–126 (KSGS). A helical membrane pass occupies residues 127–147 (IAIAASTLDSLLDLMAGGILW). Topologically, residues 148-170 (FTHLSMKSINVYKYPIGKLRVQP) are cytoplasmic. Residues 171–191 (VGIIIFAAVMATLGFQVFVQA) form a helical membrane-spanning segment. Topologically, residues 192-208 (VEKLIVNETPDKLTPVQ) are vacuolar. Residues 209-229 (LTWLYSIMIFATVVKLALWLY) traverse the membrane as a helical segment. Residues 230 to 248 (CRTSGNKIVRAYAKDHYFD) lie on the Cytoplasmic side of the membrane. The chain crosses the membrane as a helical span at residues 249–269 (VVTNVVGLAAAVLGDMFYWWI). D270 is a topological domain (vacuolar). A helical membrane pass occupies residues 271–291 (PVGAIALAVYTITNWSGTVWE). Topologically, residues 292–397 (NAVSLVGESA…ILSKLPSSQP (106 aa)) are cytoplasmic.

Belongs to the cation diffusion facilitator (CDF) transporter (TC 2.A.4) family. SLC30A subfamily.

It is found in the vacuole membrane. In terms of biological role, involved in sequestration of excess metal in the cytoplasm into vacuoles to maintain metal homeostasis. The polypeptide is Metal tolerance protein 4 (MTP4) (Oryza sativa subsp. japonica (Rice)).